The following is a 299-amino-acid chain: GTPase Era (299 aa).

In terms of domain architecture, Era-type G spans 5-175; that stretch reads RSGFVCLVGR…IDVLAAALPP (171 aa). The segment at 13-20 is G1; that stretch reads GRPNTGKS. Residue 13–20 coordinates GTP; the sequence is GRPNTGKS. Positions 39-43 are G2; that stretch reads QTTRH. The interval 60-63 is G3; sequence DTPG. GTP-binding positions include 60–64 and 124–127; these read DTPGL and TKID. The G4 stretch occupies residues 124–127; it reads TKID. The tract at residues 154–156 is G5; sequence VSA. Residues 206-285 enclose the KH type-2 domain; sequence VRDELPHSLA…YLDLRVKVAK (80 aa).

The protein belongs to the TRAFAC class TrmE-Era-EngA-EngB-Septin-like GTPase superfamily. Era GTPase family. In terms of assembly, monomer.

It localises to the cell envelope. It is found in the secreted. The protein resides in the cell wall. Functionally, exhibits GTPase activity. Binds RNA but is probably not involved in ribosome assembly in mycobacteria. This is GTPase Era from Mycolicibacterium paratuberculosis (strain ATCC BAA-968 / K-10) (Mycobacterium paratuberculosis).